Here is a 252-residue protein sequence, read N- to C-terminus: MSTLVTLNKISVTFGSRRVLNDISLSLRPGRILTLLGPNGAGKSTLVRVVLGLIAPTSGSIIREPGLRIGYVPQKLHLDTTLPLTVSRFMRLKPGVRKADILPALKRVHAAHLLDQPMQKLSGGENQRVLLARALLNRPQLLVLDEPTQGVDVNGQLALYDLIEQLRRELGCAVLMVSHDLHLVMAKTDEVLCLNQHICCSGAPEVVSTHPEFIAMFGQRGAEQLAVYRHHHNHRHDLHGKIILKNSGSRGA.

Positions 5-220 constitute an ABC transporter domain; that stretch reads VTLNKISVTF…PEFIAMFGQR (216 aa). 37-44 lines the ATP pocket; it reads GPNGAGKS.

Belongs to the ABC transporter superfamily. Zinc importer (TC 3.A.1.15.5) family. In terms of assembly, the complex is composed of two ATP-binding proteins (ZnuC), two transmembrane proteins (ZnuB) and a solute-binding protein (ZnuA).

It is found in the cell inner membrane. It catalyses the reaction Zn(2+)(out) + ATP(in) + H2O(in) = Zn(2+)(in) + ADP(in) + phosphate(in) + H(+)(in). Part of the ABC transporter complex ZnuABC involved in zinc import. Responsible for energy coupling to the transport system. This Yersinia enterocolitica serotype O:8 / biotype 1B (strain NCTC 13174 / 8081) protein is Zinc import ATP-binding protein ZnuC.